A 379-amino-acid chain; its full sequence is Glutamate 5-kinase (379 aa).

Lys8 contacts ATP. The substrate site is built by Ser49, Asp136, and Asn148. Residues 168–169 and 211–217 each bind ATP; these read TD and TGGMATK. The 79-residue stretch at 276 to 354 folds into the PUA domain; the sequence is MGKIYLDAGA…ERIASLLGYM (79 aa).

It belongs to the glutamate 5-kinase family.

The protein localises to the cytoplasm. The catalysed reaction is L-glutamate + ATP = L-glutamyl 5-phosphate + ADP. It functions in the pathway amino-acid biosynthesis; L-proline biosynthesis; L-glutamate 5-semialdehyde from L-glutamate: step 1/2. Its function is as follows. Catalyzes the transfer of a phosphate group to glutamate to form L-glutamate 5-phosphate. The sequence is that of Glutamate 5-kinase from Microcystis aeruginosa (strain NIES-843 / IAM M-2473).